We begin with the raw amino-acid sequence, 98 residues long: Large ribosomal subunit protein uL23 (98 aa).

This sequence belongs to the universal ribosomal protein uL23 family. In terms of assembly, part of the 50S ribosomal subunit. Contacts protein L29, and trigger factor when it is bound to the ribosome.

One of the early assembly proteins it binds 23S rRNA. One of the proteins that surrounds the polypeptide exit tunnel on the outside of the ribosome. Forms the main docking site for trigger factor binding to the ribosome. In Acidothermus cellulolyticus (strain ATCC 43068 / DSM 8971 / 11B), this protein is Large ribosomal subunit protein uL23.